Here is a 434-residue protein sequence, read N- to C-terminus: Alpha-enolase (434 aa).

An N-acetylserine modification is found at S2. K5 is modified (N6-acetyllysine). S27 is modified (phosphoserine). S40 contacts Mg(2+). Y44 is modified (phosphotyrosine). K60 is subject to N6-acetyllysine; alternate. Residue K60 is modified to N6-succinyllysine; alternate. K64 and K71 each carry N6-acetyllysine. K89 is modified (N6-acetyllysine; alternate). K89 is modified (N6-succinyllysine; alternate). K92 and K126 each carry N6-acetyllysine. Residues H158 and E167 each coordinate substrate. 2 positions are modified to N6-acetyllysine: K193 and K199. The residue at position 202 (K202) is an N6-acetyllysine; alternate. K202 is covalently cross-linked (Glycyl lysine isopeptide (Lys-Gly) (interchain with G-Cter in SUMO2); alternate). The Proton donor role is filled by E210. 2 positions are modified to N6-acetyllysine; alternate: K228 and K233. At K228 the chain carries N6-succinyllysine; alternate. Position 228 is an N6-(2-hydroxyisobutyryl)lysine; alternate (K228). The residue at position 233 (K233) is an N6-malonyllysine; alternate. Mg(2+) is bound at residue D245. Position 254 is a phosphoserine (S254). An N6-acetyllysine modification is found at K256. 2 positions are modified to phosphoserine: S263 and S272. K281 carries the N6-acetyllysine; alternate modification. K281 carries the N6-(2-hydroxyisobutyryl)lysine; alternate modification. K285 is modified (N6-acetyllysine). Position 287 is a phosphotyrosine (Y287). S291 carries the phosphoserine modification. Positions 293 and 318 each coordinate Mg(2+). Substrate contacts are provided by E293 and D318. K335 and K343 each carry N6-acetyllysine. K343 serves as the catalytic Proton acceptor. Residues 370 to 373 (SHRS) and K394 contribute to the substrate site. The segment at 405–434 (AKYNQLLRIEEELGSKAKFAGRNFRNPLAK) is required for interaction with PLG. N6-acetyllysine is present on K406. The residue at position 420 (K420) is an N6-acetyllysine; alternate. At K420 the chain carries N6-succinyllysine; alternate. K420 is modified (N6-malonyllysine; alternate).

Belongs to the enolase family. As to quaternary structure, mammalian enolase is composed of 3 isozyme subunits, alpha, beta and gamma, which can form homodimers or heterodimers which are cell-type and development-specific. ENO1 interacts with PLG in the neuronal plasma membrane and promotes its activation. The C-terminal lysine is required for this binding. Interacts with ENO4 and PGAM2. Interacts with CMTM6. It depends on Mg(2+) as a cofactor. In terms of processing, ISGylated. Post-translationally, lysine 2-hydroxyisobutyrylation (Khib) by p300/EP300 activates the phosphopyruvate hydratase activity.

It localises to the cytoplasm. The protein resides in the cell membrane. The enzyme catalyses (2R)-2-phosphoglycerate = phosphoenolpyruvate + H2O. The protein operates within carbohydrate degradation; glycolysis; pyruvate from D-glyceraldehyde 3-phosphate: step 4/5. Functionally, glycolytic enzyme the catalyzes the conversion of 2-phosphoglycerate to phosphoenolpyruvate. In addition to glycolysis, involved in various processes such as growth control, hypoxia tolerance and allergic responses. May also function in the intravascular and pericellular fibrinolytic system due to its ability to serve as a receptor and activator of plasminogen on the cell surface of several cell-types such as leukocytes and neurons. Stimulates immunoglobulin production. The chain is Alpha-enolase (ENO1) from Macaca fascicularis (Crab-eating macaque).